The primary structure comprises 442 residues: Zuotin (442 aa).

Positions 49–84 (RQRHGRTFSEDERLEVKNKVQEEVKEESEDEEEDPA) are disordered. Threonine 55 carries the phosphothreonine modification. The span at 55–71 (TFSEDERLEVKNKVQEE) shows a compositional bias: basic and acidic residues. Phosphoserine is present on residues serine 57 and serine 76. The segment covering 72-83 (VKEESEDEEEDP) has biased composition (acidic residues). The 71-residue stretch at 97–167 (DHYAVLGLSK…VRRRQFDSVD (71 aa)) folds into the J domain. 2 disordered regions span residues 242-270 (DGESRDNKRFQEKKNRSERQKNKARDNAR) and 306-331 (GAREAAAAAQKKKEEEERRAAEEAAA). Basic and acidic residues predominate over residues 316 to 330 (KKKEEEERRAAEEAA).

RAC is a heterodimer of the Hsp70/DnaK-type chaperone ssz1 and the Hsp40/DnaJ-type chaperone zuo1. RAC associates with ribosomes via zuo1.

It localises to the cytoplasm. Functionally, component of the ribosome-associated complex (RAC), a heterodimeric chaperone complex involved in regulation of accurate translation termination and in folding or maintaining nascent polypeptides in a folding-competent state. RAC stimulates the ATPase activity of the ribosome-associated pool of Hsp70-type chaperones SSB1/SSB2 that bind to the nascent polypeptide chain. This is Zuotin (zuo1) from Schizosaccharomyces pombe (strain 972 / ATCC 24843) (Fission yeast).